Reading from the N-terminus, the 128-residue chain is Sm-like protein LSM1A (128 aa).

In terms of domain architecture, Sm spans 10 to 85 (FFSTSLAAYL…VVLIGELDVE (76 aa)).

Belongs to the snRNP Sm proteins family. As to quaternary structure, component of the heptameric LSM1-LSM7 complex that forms a seven-membered ring structure with a donut shape. The LSM subunits are arranged in the order LSM1, LSM2, LSM3, LSM6, LSM5, LSM7 and LSM4. LSM1A subunit interacts only with its two neighboring subunits, LSM2 and LSM4. In terms of tissue distribution, expressed in roots, leaves, stems, flowers and siliques.

Its subcellular location is the cytoplasm. It is found in the P-body. In terms of biological role, component of the cytoplasmic LSM1-LSM7 complex which is involved in mRNA degradation by promoting decapping and leading to accurate 5'-3' mRNA decay. LSM1A and LSM1B are essential for the formation of the cytoplasmic LSM1-LSM7 complex which regulates developmental gene expression by the decapping of specific development-related transcripts. Required for P-body formation during heat stress. The polypeptide is Sm-like protein LSM1A (Arabidopsis thaliana (Mouse-ear cress)).